We begin with the raw amino-acid sequence, 178 residues long: ATP-dependent protease subunit HslV (178 aa).

T7 is an active-site residue. Na(+)-binding residues include G162, C165, and T168.

Belongs to the peptidase T1B family. HslV subfamily. As to quaternary structure, a double ring-shaped homohexamer of HslV is capped on each side by a ring-shaped HslU homohexamer. The assembly of the HslU/HslV complex is dependent on binding of ATP.

The protein resides in the cytoplasm. It carries out the reaction ATP-dependent cleavage of peptide bonds with broad specificity.. With respect to regulation, allosterically activated by HslU binding. Functionally, protease subunit of a proteasome-like degradation complex believed to be a general protein degrading machinery. This Janthinobacterium sp. (strain Marseille) (Minibacterium massiliensis) protein is ATP-dependent protease subunit HslV.